A 130-amino-acid chain; its full sequence is DNA replication protein 16.7 (130 aa).

Residues 1–20 (MEAILMIGVLALCVIFLLSG) form a helical membrane-spanning segment. The stretch at 30–60 (RELEDYLEDLNKRVVQRTQILSELNEVISNR) forms a coiled coil. The segment at 70-130 (ACEVAVLDLY…QKKLYRGSLK (61 aa)) is DNA-binding.

The protein belongs to the phi29likevirus gp16.7 family. As to quaternary structure, homodimer; homooligomer. Interacts with DNA; one dsDNA binding subunit is constituted by three p16.7. dimers.

Its subcellular location is the host cell membrane. In terms of biological role, binds to the long stretches of ssDNA of the viral DNA replication intermediates created during the protein-primed mechanism of replication of the viral genome and attaches the viral DNA to the membrane of the infected cells. Required for the redistribution of replicating viral DNA from the initial replication site to membrane-associated sites surrounding the nucleoid. Required for the second pull step of DNA ejection. The protein is DNA replication protein 16.7 (16.7) of Bacillus subtilis (Bacteriophage phi-29).